The primary structure comprises 343 residues: NADP-dependent alkenal double bond reductase P2 (343 aa).

Residues Y52 and Y79 each coordinate substrate. Residues 164-167 (GAVG), K190, Y206, N230, 252-258 (CGMISQY), 282-284 (FVV), and N332 each bind NADP(+).

This sequence belongs to the NADP-dependent oxidoreductase L4BD family. In terms of assembly, homodimer.

The enzyme catalyses an n-alkanal + NAD(+) = an alk-2-enal + NADH + H(+). It catalyses the reaction an n-alkanal + NADP(+) = an alk-2-enal + NADPH + H(+). Catalyzes the reduction of the 7-8 double bond of phenylpropanal substrates, such as p-coumaryl aldehyde and coniferyl aldehyde (in vitro). Has activity towards toxic substrates, such as 4-hydroxy-(2E)-nonenal (in vitro). May play a distinct role in plant antioxidant defense and is possibly involved in NAD(P)/NAD(P)h homeostasis. The polypeptide is NADP-dependent alkenal double bond reductase P2 (P2) (Arabidopsis thaliana (Mouse-ear cress)).